The sequence spans 95 residues: Glutamyl-tRNA(Gln) amidotransferase subunit C (95 aa).

Belongs to the GatC family. As to quaternary structure, heterotrimer of A, B and C subunits.

It carries out the reaction L-glutamyl-tRNA(Gln) + L-glutamine + ATP + H2O = L-glutaminyl-tRNA(Gln) + L-glutamate + ADP + phosphate + H(+). It catalyses the reaction L-aspartyl-tRNA(Asn) + L-glutamine + ATP + H2O = L-asparaginyl-tRNA(Asn) + L-glutamate + ADP + phosphate + 2 H(+). Functionally, allows the formation of correctly charged Asn-tRNA(Asn) or Gln-tRNA(Gln) through the transamidation of misacylated Asp-tRNA(Asn) or Glu-tRNA(Gln) in organisms which lack either or both of asparaginyl-tRNA or glutaminyl-tRNA synthetases. The reaction takes place in the presence of glutamine and ATP through an activated phospho-Asp-tRNA(Asn) or phospho-Glu-tRNA(Gln). The chain is Glutamyl-tRNA(Gln) amidotransferase subunit C from Mesorhizobium japonicum (strain LMG 29417 / CECT 9101 / MAFF 303099) (Mesorhizobium loti (strain MAFF 303099)).